Here is a 197-residue protein sequence, read N- to C-terminus: FMN-dependent NADH:quinone oxidoreductase (197 aa).

FMN contacts are provided by residues Ser-10, 16–18, 93–96, and 137–140; these read SQS, MYNF, and TRGG.

The protein belongs to the azoreductase type 1 family. As to quaternary structure, homodimer. FMN serves as cofactor.

The catalysed reaction is 2 a quinone + NADH + H(+) = 2 a 1,4-benzosemiquinone + NAD(+). It catalyses the reaction N,N-dimethyl-1,4-phenylenediamine + anthranilate + 2 NAD(+) = 2-(4-dimethylaminophenyl)diazenylbenzoate + 2 NADH + 2 H(+). Functionally, quinone reductase that provides resistance to thiol-specific stress caused by electrophilic quinones. Also exhibits azoreductase activity. Catalyzes the reductive cleavage of the azo bond in aromatic azo compounds to the corresponding amines. In Shewanella loihica (strain ATCC BAA-1088 / PV-4), this protein is FMN-dependent NADH:quinone oxidoreductase.